The following is a 281-amino-acid chain: Oxidase pynE (281 aa).

The protein belongs to the avfA family.

It participates in secondary metabolite biosynthesis. Functionally, oxidase; part of the gene cluster that mediates the biosynthesis of pyranonigrins, a family of antioxidative compounds. The first step of pyranonigrins biosynthesis is performed by the hybrid PKS-NRPS synthetase that condenses 6 malonyl-CoA units to an acetyl starter unit, to form a 1,3,5-trioxotetradecane-6,8-dienyl-ACP. The enoyl reductase (ER) domain of pynA is likely to be functional during the first two rounds of polyketide chain extension, to generate the saturated C-C bonds of the alkyl side chain. PynA subsequently forms the amide bond between the acyl chain and L-serine. Although pynA has a terminal reductase domain, it appears to require the thioesterase pynI for the release of the straight-chain intermediate from pynA via the formation of a tetramic acid pyranonigrin J. The methyltransferase pynC then coverts pyranonigrin J to pyranonigrin I via N-methylation. The FAD-dependent monooxygenase pynG catalyzes an epoxidation-mediated cyclization to form the dihydro-gamma-pyrone moiety, followed by pynD-catalyzed oxidation of the alcohol to the ketone and enolization to yield the characteristic tetramic acid-fused gamma-pyrone core of pyranonigrin H. Pyranonigrin H is substrate of pynH for dehydration-mediated exo-methylene formation from the serine side chain to produce pyranonigrin E, before the oxidase pynE reduces the exo-methylene of pyranonigrin E into a pendant methyl to form pyranonigrin G. The FAD-linked oxidoreductase pynB performs the reverse reaction and converts pyranonigrin G back to pyranonigrin E. This Aspergillus niger (strain ATCC MYA-4892 / CBS 513.88 / FGSC A1513) protein is Oxidase pynE.